Reading from the N-terminus, the 399-residue chain is Acetylornithine aminotransferase (399 aa).

Residues 102 to 103 (GA) and phenylalanine 138 contribute to the pyridoxal 5'-phosphate site. N(2)-acetyl-L-ornithine is bound at residue arginine 141. Position 223 to 226 (223 to 226 (DEVQ)) interacts with pyridoxal 5'-phosphate. Residue lysine 252 is modified to N6-(pyridoxal phosphate)lysine. Threonine 280 serves as a coordination point for pyridoxal 5'-phosphate.

Belongs to the class-III pyridoxal-phosphate-dependent aminotransferase family. ArgD subfamily. Homodimer. Pyridoxal 5'-phosphate serves as cofactor.

It is found in the cytoplasm. It carries out the reaction N(2)-acetyl-L-ornithine + 2-oxoglutarate = N-acetyl-L-glutamate 5-semialdehyde + L-glutamate. It participates in amino-acid biosynthesis; L-arginine biosynthesis; N(2)-acetyl-L-ornithine from L-glutamate: step 4/4. The protein is Acetylornithine aminotransferase of Ralstonia nicotianae (strain ATCC BAA-1114 / GMI1000) (Ralstonia solanacearum).